A 375-amino-acid polypeptide reads, in one-letter code: Succinyl-diaminopimelate desuccinylase (375 aa).

H66 contacts Zn(2+). Residue D68 is part of the active site. D99 is a binding site for Zn(2+). E133 functions as the Proton acceptor in the catalytic mechanism. Residues E134, E162, and H348 each coordinate Zn(2+).

The protein belongs to the peptidase M20A family. DapE subfamily. Homodimer. It depends on Zn(2+) as a cofactor. Requires Co(2+) as cofactor.

The catalysed reaction is N-succinyl-(2S,6S)-2,6-diaminopimelate + H2O = (2S,6S)-2,6-diaminopimelate + succinate. Its pathway is amino-acid biosynthesis; L-lysine biosynthesis via DAP pathway; LL-2,6-diaminopimelate from (S)-tetrahydrodipicolinate (succinylase route): step 3/3. Catalyzes the hydrolysis of N-succinyl-L,L-diaminopimelic acid (SDAP), forming succinate and LL-2,6-diaminopimelate (DAP), an intermediate involved in the bacterial biosynthesis of lysine and meso-diaminopimelic acid, an essential component of bacterial cell walls. This Janthinobacterium sp. (strain Marseille) (Minibacterium massiliensis) protein is Succinyl-diaminopimelate desuccinylase.